Consider the following 291-residue polypeptide: tRNA U34 carboxymethyltransferase (291 aa).

Carboxy-S-adenosyl-L-methionine-binding positions include K61, W75, K80, G100, 122–124, Y169, and R284; that span reads DPS.

It belongs to the class I-like SAM-binding methyltransferase superfamily. CmoB family. Homotetramer.

It catalyses the reaction carboxy-S-adenosyl-L-methionine + 5-hydroxyuridine(34) in tRNA = 5-carboxymethoxyuridine(34) in tRNA + S-adenosyl-L-homocysteine + H(+). Its function is as follows. Catalyzes carboxymethyl transfer from carboxy-S-adenosyl-L-methionine (Cx-SAM) to 5-hydroxyuridine (ho5U) to form 5-carboxymethoxyuridine (cmo5U) at position 34 in tRNAs. This Campylobacter lari (strain RM2100 / D67 / ATCC BAA-1060) protein is tRNA U34 carboxymethyltransferase.